The chain runs to 173 residues: Large ribosomal subunit protein uL10 (173 aa).

Belongs to the universal ribosomal protein uL10 family. Part of the ribosomal stalk of the 50S ribosomal subunit. The N-terminus interacts with L11 and the large rRNA to form the base of the stalk. The C-terminus forms an elongated spine to which L12 dimers bind in a sequential fashion forming a multimeric L10(L12)X complex.

In terms of biological role, forms part of the ribosomal stalk, playing a central role in the interaction of the ribosome with GTP-bound translation factors. The polypeptide is Large ribosomal subunit protein uL10 (Thiobacillus denitrificans (strain ATCC 25259 / T1)).